The sequence spans 1063 residues: TBC1 domain family member 31 (1063 aa).

7 WD repeats span residues 33-74, 75-116, 117-157, 158-200, 201-248, 249-296, and 297-334; these read HNTS…LCGN, RFNL…TVTK, ELVS…LDTF, QRKR…CDTL, VCKY…AKQL, FRII…IQTC, and KLLFEIGSLDDGISSSVISPHGRYIASIMENGSLNIYS. The Rab-GAP TBC domain occupies 424–599; that stretch reads EFPTKYRMFI…KLFDNVFSNH (176 aa). Positions 699 to 951 form a coiled coil; that stretch reads ELDYLRERQA…EAKKWEEAEE (253 aa). Residues 1050–1053 form a mediates direct interaction with PJA2 region; that stretch reads QAQN.

Interacts with PJA2; the interaction is direct and recruits PJA2 to centrosomes. Interacts with OFD1; regulates its activity in cilium assembly. Interacts with PRKACA.

The protein resides in the cytoplasm. It localises to the cytoskeleton. Its subcellular location is the microtubule organizing center. The protein localises to the centrosome. It is found in the centriolar satellite. The protein resides in the cilium basal body. Its function is as follows. Molecular adapter which is involved in cilium biogenesis. Part of a functional complex including OFD1 a centriolar protein involved in cilium assembly. Could regulate the cAMP-dependent phosphorylation of OFD1, and its subsequent ubiquitination by PJA2 which ultimately leads to its proteasomal degradation. This Bos taurus (Bovine) protein is TBC1 domain family member 31.